The following is a 141-amino-acid chain: MLERTFSIIKPDAVKRNLIGQIVSKLEQNGLKVIASKMVFLTVQEAKGFYAEHDGKPFFDTLIKNMTAGPIVVQVLEGDDAIAKNREIMGPTDPENAPAGSIRKEYAISMQQNSVHGSDSPESAQREISYFFSEIEVFSAS.

ATP-binding residues include Lys-10, Phe-58, Arg-86, Thr-92, Arg-103, and Asn-113. The active-site Pros-phosphohistidine intermediate is His-116.

Belongs to the NDK family. In terms of assembly, homotetramer. The cofactor is Mg(2+).

It localises to the cytoplasm. The enzyme catalyses a 2'-deoxyribonucleoside 5'-diphosphate + ATP = a 2'-deoxyribonucleoside 5'-triphosphate + ADP. It catalyses the reaction a ribonucleoside 5'-diphosphate + ATP = a ribonucleoside 5'-triphosphate + ADP. Major role in the synthesis of nucleoside triphosphates other than ATP. The ATP gamma phosphate is transferred to the NDP beta phosphate via a ping-pong mechanism, using a phosphorylated active-site intermediate. This is Nucleoside diphosphate kinase from Hydrogenovibrio crunogenus (strain DSM 25203 / XCL-2) (Thiomicrospira crunogena).